Here is a 154-residue protein sequence, read N- to C-terminus: Ribonuclease H (154 aa).

One can recognise an RNase H type-1 domain in the interval 1 to 142; the sequence is MRKQVEIFTD…CDELARAAAG (142 aa). Residues Asp-10, Glu-48, Asp-70, and Asp-134 each coordinate Mg(2+).

Belongs to the RNase H family. Monomer. Mg(2+) serves as cofactor.

It localises to the cytoplasm. The catalysed reaction is Endonucleolytic cleavage to 5'-phosphomonoester.. In terms of biological role, endonuclease that specifically degrades the RNA of RNA-DNA hybrids. In Pectobacterium carotovorum subsp. carotovorum (strain PC1), this protein is Ribonuclease H.